Consider the following 263-residue polypeptide: Endonuclease 8 (263 aa).

Pro2 functions as the Schiff-base intermediate with DNA in the catalytic mechanism. Glu3 functions as the Proton donor in the catalytic mechanism. Lys53 (proton donor; for beta-elimination activity) is an active-site residue. 3 residues coordinate DNA: Gln70, Arg125, and Asn169. The segment at 229–263 adopts an FPG-type zinc-finger fold; sequence KVFHRDGELCERCGGIIEKTTLSSRPFYWCPGCQH. The active-site Proton donor; for delta-elimination activity is Arg253.

Belongs to the FPG family. It depends on Zn(2+) as a cofactor.

It carries out the reaction 2'-deoxyribonucleotide-(2'-deoxyribose 5'-phosphate)-2'-deoxyribonucleotide-DNA = a 3'-end 2'-deoxyribonucleotide-(2,3-dehydro-2,3-deoxyribose 5'-phosphate)-DNA + a 5'-end 5'-phospho-2'-deoxyribonucleoside-DNA + H(+). Involved in base excision repair of DNA damaged by oxidation or by mutagenic agents. Acts as a DNA glycosylase that recognizes and removes damaged bases. Has a preference for oxidized pyrimidines, such as thymine glycol, 5,6-dihydrouracil and 5,6-dihydrothymine. Has AP (apurinic/apyrimidinic) lyase activity and introduces nicks in the DNA strand. Cleaves the DNA backbone by beta-delta elimination to generate a single-strand break at the site of the removed base with both 3'- and 5'-phosphates. This Escherichia coli (strain SE11) protein is Endonuclease 8.